Consider the following 453-residue polypeptide: Alpha-glucosidase (453 aa).

3–69 (TKIVLVGAGS…LPFIVSATTD (67 aa)) provides a ligand contact to NAD(+). Asn-149 is a substrate binding site. Cys-171 serves as a coordination point for Mn(2+). His-172 acts as the Proton donor in catalysis. His-201 contributes to the Mn(2+) binding site.

In terms of assembly, homotetramer. The cofactor is Mn(2+). Co(2+) serves as cofactor. Requires Ca(2+) as cofactor. It depends on Fe(2+) as a cofactor. Mg(2+) is required as a cofactor. The cofactor is Sr(2+). Ni(2+) serves as cofactor. Requires NAD(+) as cofactor.

The enzyme catalyses Hydrolysis of terminal, non-reducing (1-&gt;4)-linked alpha-D-glucose residues with release of alpha-D-glucose.. Its pathway is glycan degradation; palatinose degradation. Is inhibited by EDTA in vitro. In terms of biological role, alpha-glucosidase with broad specificity. Hydrolyzes maltose, palatinose, maltulose, trehalose, trehalulose, turanose, leucrose, sucrose and maltitol. Is not active against alpha-galactosides, e.g. melibiose, and alpha-mannosides. Shows an obligate requirement for an O-alpha-glycosidic linkage, since it is not able to cleave beta-glycosidic bonds (cellobiose, gentiobiose, lactose, sophorose or laminaribiose). Cannot hydrolyze phosphorylated alpha-glucosides derivatives. Seems to be involved in the degradation of palatinose, a sucrose isomer that is formed as a reserve material under conditions of excess carbon availability, sequestered in a form unavailable to competitors such as fungi or the host plant, and whose consumption appears to be postponed until the preferentially metabolized carbon source (e.g. sucrose) is depleted. This chain is Alpha-glucosidase (palH), found in Erwinia rhapontici (Pectobacterium rhapontici).